The primary structure comprises 166 residues: Small ribosomal subunit protein bS18m (166 aa).

Residues 1 to 31 (MLGRRIFSPAPNRGFILCNLIQSNNSTRRGF) constitute a mitochondrion transit peptide. The interval 29–48 (RGFSDNRKFNERNSEASSNV) is disordered. A compositionally biased stretch (basic and acidic residues) spans 30-42 (GFSDNRKFNERNS).

Belongs to the bacterial ribosomal protein bS18 family. As to quaternary structure, component of the mitochondrial small ribosomal subunit (mt-SSU). Mature yeast 74S mitochondrial ribosomes consist of a small (37S) and a large (54S) subunit. The 37S small subunit contains a 15S ribosomal RNA (15S mt-rRNA) and at least 32 different proteins. The 54S large subunit contains a 21S rRNA (21S mt-rRNA) and at least 45 different proteins.

Its subcellular location is the mitochondrion. Functionally, component of the mitochondrial ribosome (mitoribosome), a dedicated translation machinery responsible for the synthesis of mitochondrial genome-encoded proteins, including at least some of the essential transmembrane subunits of the mitochondrial respiratory chain. The mitoribosomes are attached to the mitochondrial inner membrane and translation products are cotranslationally integrated into the membrane. This Schizosaccharomyces pombe (strain 972 / ATCC 24843) (Fission yeast) protein is Small ribosomal subunit protein bS18m (rsm18).